The sequence spans 266 residues: MKTITKIAIQKRAGRYSIELDNQFAFGVAESVLIKYGLAKGRTLDEDLITQIKYDDAIAKALTIALNYLGHALRTTKQIKQKMRDKAVDEDIQAQVIAQLTQLGYVDDQNYANHYVATKKLITPKGPHVIRLALQQAGVAENMIEQALATYTFDEQCSIATKIAEKLAQGYQRESTRLRQQKMVQGLVNKGFSFETAQLVVDSMNIDNNAEDEQNNAKRQAEKLWHRYRHDESQQRFYKVKRQLYAKGFTSELIDAALLSLEQEEV.

This sequence belongs to the RecX family.

The protein resides in the cytoplasm. Functionally, modulates RecA activity. The chain is Regulatory protein RecX from Leuconostoc citreum (strain KM20).